Reading from the N-terminus, the 444-residue chain is MGKLLQLALHPVEMKAALKLKFCRTPLFSIYDQSTSPYLLHCFELLNLTSRSFAAVIRELHPELRNCVTLFYLILRALDTIEDDMSIEHDLKIDLLRHFHEKLLLTKWSFDGNAPDVKDRAVLTDFESILIEFHKLKPEYQEVIKEITEKMGNGMADYILDENYNLNGLQTVHDYDVYCHYVAGLVGDGLTRLIVIAKFANESLYSNEQLYESMGLFLQKTNIIRDYNEDLVDGRSFWPKEIWSQYAPQLKDFMKPENEQLGLDCINHLVLNALSHVIDVLTYLAGIHEQSTFQFCAIPQVMAIATLALVFNNREVLHGNVKIRKGTTCYLILKSRTLRGCVEIFDYYLRDIKSKLAVQDPNFLKLNIQISKIEQFMEEMYQDKLPPNVKPNETPIFLKVKERSRYDDELVPTQQEEEYKFNMVLSIILSVLLGFYYIYTLHRA.

The helical transmembrane segment at 421–441 threads the bilayer; the sequence is FNMVLSIILSVLLGFYYIYTL.

It belongs to the phytoene/squalene synthase family. Mg(2+) serves as cofactor.

It localises to the endoplasmic reticulum membrane. Its subcellular location is the microsome. The enzyme catalyses 2 (2E,6E)-farnesyl diphosphate + NADPH + H(+) = squalene + 2 diphosphate + NADP(+). It carries out the reaction 2 (2E,6E)-farnesyl diphosphate + NADH + H(+) = squalene + 2 diphosphate + NAD(+). The protein operates within terpene metabolism; lanosterol biosynthesis; lanosterol from farnesyl diphosphate: step 1/3. In terms of biological role, squalene synthase; part of the third module of ergosterol biosynthesis pathway that includes the late steps of the pathway. ERG9 produces squalene from 2 farnesyl pyrophosphate moieties. The third module or late pathway involves the ergosterol synthesis itself through consecutive reactions that mainly occur in the endoplasmic reticulum (ER) membrane. Firstly, the squalene synthase ERG9 catalyzes the condensation of 2 farnesyl pyrophosphate moieties to form squalene, which is the precursor of all steroids. Squalene synthase is crucial for balancing the incorporation of farnesyl diphosphate (FPP) into sterol and nonsterol isoprene synthesis. Secondly, the squalene epoxidase ERG1 catalyzes the stereospecific oxidation of squalene to (S)-2,3-epoxysqualene, which is considered to be a rate-limiting enzyme in steroid biosynthesis. Then, the lanosterol synthase ERG7 catalyzes the cyclization of (S)-2,3 oxidosqualene to lanosterol, a reaction that forms the sterol core. In the next steps, lanosterol is transformed to zymosterol through a complex process involving various demethylation, reduction and desaturation reactions. The lanosterol 14-alpha-demethylase ERG11 (also known as CYP51) catalyzes C14-demethylation of lanosterol to produce 4,4'-dimethyl cholesta-8,14,24-triene-3-beta-ol, which is critical for ergosterol biosynthesis. The C-14 reductase ERG24 reduces the C14=C15 double bond of 4,4-dimethyl-cholesta-8,14,24-trienol to produce 4,4-dimethyl-cholesta-8,24-dienol. 4,4-dimethyl-cholesta-8,24-dienol is substrate of the C-4 demethylation complex ERG25-ERG26-ERG27 in which ERG25 catalyzes the three-step monooxygenation required for the demethylation of 4,4-dimethyl and 4alpha-methylsterols, ERG26 catalyzes the oxidative decarboxylation that results in a reduction of the 3-beta-hydroxy group at the C-3 carbon to an oxo group, and ERG27 is responsible for the reduction of the keto group on the C-3. ERG28 has a role as a scaffold to help anchor ERG25, ERG26 and ERG27 to the endoplasmic reticulum and ERG29 regulates the activity of the iron-containing C4-methylsterol oxidase ERG25. Then, the sterol 24-C-methyltransferase ERG6 catalyzes the methyl transfer from S-adenosyl-methionine to the C-24 of zymosterol to form fecosterol. The C-8 sterol isomerase ERG2 catalyzes the reaction which results in unsaturation at C-7 in the B ring of sterols and thus converts fecosterol to episterol. The sterol-C5-desaturase ERG3 then catalyzes the introduction of a C-5 double bond in the B ring to produce 5-dehydroepisterol. The C-22 sterol desaturase ERG5 further converts 5-dehydroepisterol into ergosta-5,7,22,24(28)-tetraen-3beta-ol by forming the C-22(23) double bond in the sterol side chain. Finally, ergosta-5,7,22,24(28)-tetraen-3beta-ol is substrate of the C-24(28) sterol reductase ERG4 to produce ergosterol. The protein is Squalene synthase ERG9 of Saccharomyces cerevisiae (strain ATCC 204508 / S288c) (Baker's yeast).